The chain runs to 445 residues: Tryptamine benzoyltransferase 1 (445 aa).

Residues His-150 and Asp-382 each act as proton acceptor in the active site.

Belongs to the plant acyltransferase family.

Its function is as follows. Hydroxycinnamoyl transferase that catalyzes the transfer of an acyl from benzoyl-CoA to tryptamine, to produce benzoyl tryptamine. Serotonin and tyramine serve as acyl acceptors in vitro. Can use p-coumaroyl-CoA, and to a lesser extent caffeoyl-CoA, as acyl donors. This is Tryptamine benzoyltransferase 1 from Oryza sativa subsp. japonica (Rice).